We begin with the raw amino-acid sequence, 976 residues long: MELQAARACFALLWGCALAAAAAAQGKEVVLLDFAAAGGELGWLTHPYGKGWDLMQNIMNDMPIYMYSVCNVMSGDQDNWLRTNWVYRGEAERIFIELKFTVRDCNSFPGGASSCKETFNLYYAESDLDYGTNFQKRLFTKIDTIAPDEITVSSDFEARHVKLNVEERSVGPLTRKGFYLAFQDIGACVALLSVRVYYKKCPELLQGLAHFPETIAGSDAPSLATVAGTCVDHAVVPPGGEEPRMHCAVDGEWLVPIGQCLCQAGYEKVEDACQACSPGFFKFEASESPCLECPEHTLPSPEGATSCECEEGFFRAPQDPASMPCTRPPSAPHYLTAVGMGAKVELRWTPPQDSGGREDIVYSVTCEQCWPESGECGPCEASVRYSEPPHGLTRTSVTVSDLEPHMNYTFTVEARNGVSGLVTSRSFRTASVSINQTEPPKVRLEGRSTTSLSVSWSIPPPQQSRVWKYEVTYRKKGDSNSYNVRRTEGFSVTLDDLAPDTTYLVQVQALTQEGQGAGSKVHEFQTLSPEGSGNLAVIGGVAVGVVLLLVLAGVGFFIHRRRKNQRARQSPEDVYFSKSEQLKPLKTYVDPHTYEDPNQAVLKFTTEIHPSCVTRQKVIGAGEFGEVYKGMLKTSSGKKEVPVAIKTLKAGYTEKQRVDFLGEAGIMGQFSHHNIIRLEGVISKYKPMMIITEYMENGALDKFLREKDGEFSVLQLVGMLRGIAAGMKYLANMNYVHRDLAARNILVNSNLVCKVSDFGLSRVLEDDPEATYTTSGGKIPIRWTAPEAISYRKFTSASDVWSFGIVMWEVMTYGERPYWELSNHEVMKAINDGFRLPTPMDCPSAIYQLMMQCWQQERARRPKFADIVSILDKLIRAPDSLKTLADFDPRVSIRLPSTSGSEGVPFRTVSEWLESIKMQQYTEHFMAAGYTAIEKVVQMTNDDIKRIGVRLPGHQKRIAYSLLGLKDQVNTVGIPI.

The first 23 residues, 1–23, serve as a signal peptide directing secretion; the sequence is MELQAARACFALLWGCALAAAAA. The tract at residues 1 to 206 is mediates interaction with CLDN4; that stretch reads MELQAARACF…YYKKCPELLQ (206 aa). Topologically, residues 24–537 are extracellular; sequence AQGKEVVLLD…SPEGSGNLAV (514 aa). One can recognise an Eph LBD domain in the interval 28–206; it reads EVVLLDFAAA…YYKKCPELLQ (179 aa). 2 disulfide bridges follow: Cys-70-Cys-188 and Cys-105-Cys-115. Positions 328–432 constitute a Fibronectin type-III 1 domain; it reads PPSAPHYLTA…TSRSFRTASV (105 aa). Asn-407 and Asn-435 each carry an N-linked (GlcNAc...) asparagine glycan. Positions 438–529 constitute a Fibronectin type-III 2 domain; it reads EPPKVRLEGR…KVHEFQTLSP (92 aa). A helical transmembrane segment spans residues 538–558; sequence IGGVAVGVVLLLVLAGVGFFI. Residues 559 to 976 lie on the Cytoplasmic side of the membrane; it reads HRRRKNQRAR…DQVNTVGIPI (418 aa). Residue Ser-570 is modified to Phosphoserine. Tyr-575 bears the Phosphotyrosine mark. At Ser-579 the chain carries Phosphoserine. Residue Tyr-588 is modified to Phosphotyrosine; by autocatalysis. Tyr-594 bears the Phosphotyrosine mark. The mediates interaction with ARHGEF16 and ELMO2 stretch occupies residues 606–906; that stretch reads TEIHPSCVTR…STSGSEGVPF (301 aa). Positions 613–875 constitute a Protein kinase domain; it reads VTRQKVIGAG…DIVSILDKLI (263 aa). 619–627 is an ATP binding site; it reads IGAGEFGEV. Position 628 is a phosphotyrosine (Tyr-628). ATP is bound at residue Lys-646. Thr-647 is modified (phosphothreonine). Tyr-735 carries the phosphotyrosine; by autocatalysis modification. The Proton acceptor role is filled by Asp-739. Phosphotyrosine is present on Tyr-772. Residues Ser-869 and Ser-892 each carry the phosphoserine modification. The negatively regulates interaction with ARHGEF16 stretch occupies residues 886–976; that stretch reads DFDPRVSIRL…DQVNTVGIPI (91 aa). Ser-897 carries the post-translational modification Phosphoserine; by PKB/AKT1, RPS6KA1, RPS6KA3 AND PKA. Residue Ser-901 is modified to Phosphoserine. The SAM domain maps to 904–968; that stretch reads VPFRTVSEWL…AYSLLGLKDQ (65 aa). Tyr-921 is subject to Phosphotyrosine; by autocatalysis. Residue Tyr-930 is modified to Phosphotyrosine. The PDZ-binding signature appears at 974–976; sequence IPI.

This sequence belongs to the protein kinase superfamily. Tyr protein kinase family. Ephrin receptor subfamily. As to quaternary structure, homodimer. Interacts with SLA. Interacts (phosphorylated form) with VAV2, VAV3 and PI3-kinase p85 subunit (PIK3R1, PIK3R2 or PIK3R3); critical for the EFNA1-induced activation of RAC1 which stimulates cell migration. Interacts with INPPL1; regulates activated EPHA2 endocytosis and degradation. Interacts (inactivated form) with PTK2/FAK1 and interacts (EFNA1 ligand-activated form) with PTPN11; regulates integrin-mediated adhesion. Interacts with ARHGEF16, DOCK4 and ELMO2; mediates ligand-independent activation of RAC1 which stimulates cell migration. Interacts with CLDN4; phosphorylates CLDN4 and may regulate tight junctions. Interacts with ACP1. Interacts (via SAM domain) with ANKS1A (via SAM domain). Interacts with CEMIP. Interacts with NCK1; may regulate EPHA2 activity in cell migration and adhesion. Interacts with TIMD4. (Microbial infection) Interacts with human herpes virus 8/HHV-8 glycoprotein L/gL and glycoprotein H/gH heterodimer; this interaction triggers EPHA2 phosphorylation and endocytosis, allowing virus entry. In terms of assembly, (Microbial infection) Interacts with human cytomegalovirus (HCMV) glycoprotein L/gL and glycoprotein H/gH heterodimer. As to quaternary structure, (Microbial infection) Interacts with Epstein-Barr virus/HHV-4 glycoprotein L/gL and glycoprotein H/gH heterodimer; this interaction facilitates virus internalization and fusion. In terms of processing, autophosphorylates. Phosphorylated on tyrosine upon binding and activation by EFNA1. Phosphorylated residues Tyr-588 and Tyr-594 are required for binding VAV2 and VAV3 while phosphorylated residues Tyr-735 and Tyr-930 are required for binding PI3-kinase p85 subunit (PIK3R1, PIK3R2 or PIK3R3). These phosphorylated residues are critical for recruitment of VAV2 and VAV3 and PI3-kinase p85 subunit which transduce downstream signaling to activate RAC1 GTPase and cell migration. Dephosphorylation of Tyr-930 by PTPRF prevents the interaction of EPHA2 with NCK1. Phosphorylated at Ser-897 by PKB; serum-induced phosphorylation which targets EPHA2 to the cell leading edge and stimulates cell migration. Phosphorylation by PKB is inhibited by EFNA1-activated EPHA2 which regulates PKB activity via a reciprocal regulatory loop. Phosphorylated at Ser-897 in response to TNF by RPS6KA1 and RPS6KA3; RPS6KA-EPHA2 signaling pathway controls cell migration. Phosphorylated at Ser-897 by PKA; blocks cell retraction induced by EPHA2 kinase activity. Dephosphorylated by ACP1. Ubiquitinated by CHIP/STUB1. Ubiquitination is regulated by the HSP90 chaperone and regulates the receptor stability and activity through proteasomal degradation. ANKS1A prevents ubiquitination and degradation. In terms of tissue distribution, expressed in brain and glioma tissue and glioma cell lines (at protein level). Expressed most highly in tissues that contain a high proportion of epithelial cells, e.g. skin, intestine, lung, and ovary.

It is found in the cell membrane. The protein resides in the cell projection. The protein localises to the ruffle membrane. It localises to the lamellipodium membrane. Its subcellular location is the cell junction. It is found in the focal adhesion. It carries out the reaction L-tyrosyl-[protein] + ATP = O-phospho-L-tyrosyl-[protein] + ADP + H(+). Receptor tyrosine kinase which binds promiscuously membrane-bound ephrin-A family ligands residing on adjacent cells, leading to contact-dependent bidirectional signaling into neighboring cells. The signaling pathway downstream of the receptor is referred to as forward signaling while the signaling pathway downstream of the ephrin ligand is referred to as reverse signaling. Activated by the ligand ephrin-A1/EFNA1 regulates migration, integrin-mediated adhesion, proliferation and differentiation of cells. Regulates cell adhesion and differentiation through DSG1/desmoglein-1 and inhibition of the ERK1/ERK2 (MAPK3/MAPK1, respectively) signaling pathway. May also participate in UV radiation-induced apoptosis and have a ligand-independent stimulatory effect on chemotactic cell migration. During development, may function in distinctive aspects of pattern formation and subsequently in development of several fetal tissues. Involved for instance in angiogenesis, in early hindbrain development and epithelial proliferation and branching morphogenesis during mammary gland development. Engaged by the ligand ephrin-A5/EFNA5 may regulate lens fiber cells shape and interactions and be important for lens transparency development and maintenance. With ephrin-A2/EFNA2 may play a role in bone remodeling through regulation of osteoclastogenesis and osteoblastogenesis. Its function is as follows. (Microbial infection) Acts as a receptor for hepatitis C virus (HCV) in hepatocytes and facilitates its cell entry. Mediates HCV entry by promoting the formation of the CD81-CLDN1 receptor complexes that are essential for HCV entry and by enhancing membrane fusion of cells expressing HCV envelope glycoproteins. In terms of biological role, acts as a receptor for human cytomegalovirus (HCMV) to mediate viral entry and fusion in glioblastoma cells. This Homo sapiens (Human) protein is Ephrin type-A receptor 2 (EPHA2).